Reading from the N-terminus, the 719-residue chain is Nucleolar complex protein 2 homolog (719 aa).

The segment covering 1–24 (MKLLKKSSSLKKGVTKRAKLQKKP) has biased composition (basic residues). Disordered stretches follow at residues 1–67 (MKLL…GMKK), 86–136 (LQQE…TKIK), and 643–719 (ALEN…SDED). Positions 25 to 42 (PSKDEASSSDEELAKLDG) are enriched in basic and acidic residues. Residues 89–130 (EDADLLNMEEDEDDDEEGEDNEDEEDEEEEEESDEDDDEEDD) are compositionally biased toward acidic residues. The span at 643–661 (ALENSKKDDKKKKKEEEAA) shows a compositional bias: basic and acidic residues.

This sequence belongs to the NOC2 family.

It localises to the nucleus. Required for normal somatic gonad development and for regulation of germline development and proliferation. The chain is Nucleolar complex protein 2 homolog (pro-2) from Caenorhabditis briggsae.